The following is a 226-amino-acid chain: Protein Thf1 (226 aa).

A coiled-coil region spans residues 183–213 (EEKMQKDLDLYRSNLEKMDQLLTVIEEALQA).

Belongs to the THF1 family.

Functionally, may be involved in photosynthetic membrane biogenesis. The sequence is that of Protein Thf1 from Gloeothece citriformis (strain PCC 7424) (Cyanothece sp. (strain PCC 7424)).